The chain runs to 215 residues: Nascent polypeptide-associated complex subunit alpha (215 aa).

The tract at residues 1–82 is disordered; the sequence is MPGEATETVP…EKKARKAMSK (82 aa). Positions 9–28 are enriched in polar residues; it reads VPVTEQEMQQPQAETGSGTE. Residues 29–42 show a composition bias toward acidic residues; it reads SDSDESVPDLEEGD. Residues 44–57 are compositionally biased toward low complexity; the sequence is AQTQTQQAQLAAAA. Residues 70–135 form the NAC-A/B domain; it reads SRSEKKARKA…AKIEDLSQQA (66 aa). The residue at position 166 (serine 166) is a Phosphoserine. A UBA domain is found at 176 to 213; the sequence is VEVKDIELVMSQANVSRAKAVRALKNNNNDIVNAIMEL.

The protein belongs to the NAC-alpha family.

May promote appropriate targeting of ribosome-nascent polypeptide complexes. This chain is Nascent polypeptide-associated complex subunit alpha (naca), found in Danio rerio (Zebrafish).